The sequence spans 399 residues: MTDVQAALELIKRGAEELLVEAELVEKLESDRPLRVKAGFDPTAPDLHLGHTVLLNKLRHFQELGHQVMFLVGDFTAMIGDPSGKNATRPPLSREQILENARTYQEQVFKILDPDKTEICFNSSWMESLGTAGMIRLASRYTVARMLERDDFAKRYAGGQAIAIHEFLYPLCQGYDSVAMRADVELGGTDQKFNLLVGRELQKHDRQAPQCVLMMPLLEGLDGVNKMSKSLGNYIGITEAPREIFGKIMSISDSLMWRYFDLLSFHPAVEIARYRAEVEGGRNPRELKVLLAQEIVARFHSHAAAEDALADFEARFQRGVLPDDIPEVNVVVGDGGLPVFQVVKQAGLTGSTSEALRMIEQGAVRLNGERVEDKGLVLQRDQTVVLQVGKRKFASVVLN.

A 'HIGH' region motif is present at residues 42 to 51 (PTAPDLHLGH). Residues 226–230 (KMSKS) carry the 'KMSKS' region motif. Position 229 (lysine 229) interacts with ATP. An S4 RNA-binding domain is found at 337–398 (LPVFQVVKQA…GKRKFASVVL (62 aa)).

It belongs to the class-I aminoacyl-tRNA synthetase family. TyrS type 2 subfamily. As to quaternary structure, homodimer.

It localises to the cytoplasm. The catalysed reaction is tRNA(Tyr) + L-tyrosine + ATP = L-tyrosyl-tRNA(Tyr) + AMP + diphosphate + H(+). Its function is as follows. Catalyzes the attachment of tyrosine to tRNA(Tyr) in a two-step reaction: tyrosine is first activated by ATP to form Tyr-AMP and then transferred to the acceptor end of tRNA(Tyr). This is Tyrosine--tRNA ligase from Aromatoleum aromaticum (strain DSM 19018 / LMG 30748 / EbN1) (Azoarcus sp. (strain EbN1)).